The chain runs to 464 residues: Chromosomal replication initiator protein DnaA (464 aa).

The tract at residues 1-82 (MSLSLWQQCL…LLRFEVGSKP (82 aa)) is domain I, interacts with DnaA modulators. The tract at residues 82-127 (PPQMAVLQPASQHASEAPSQAAVARPRPSRPSWDNAPVQPELSYRS) is domain II. Positions 91–118 (ASQHASEAPSQAAVARPRPSRPSWDNAP) are disordered. Residues 128–344 (NVNPKHNFDN…GALNRVIANA (217 aa)) are domain III, AAA+ region. ATP-binding residues include glycine 172, glycine 174, lysine 175, and threonine 176. Positions 345 to 464 (NFTGRAITID…FSNLIRTLSS (120 aa)) are domain IV, binds dsDNA.

The protein belongs to the DnaA family. Oligomerizes as a right-handed, spiral filament on DNA at oriC.

Its subcellular location is the cytoplasm. Functionally, plays an essential role in the initiation and regulation of chromosomal replication. ATP-DnaA binds to the origin of replication (oriC) to initiate formation of the DNA replication initiation complex once per cell cycle. Binds the DnaA box (a 9 base pair repeat at the origin) and separates the double-stranded (ds)DNA. Forms a right-handed helical filament on oriC DNA; dsDNA binds to the exterior of the filament while single-stranded (ss)DNA is stabiized in the filament's interior. The ATP-DnaA-oriC complex binds and stabilizes one strand of the AT-rich DNA unwinding element (DUE), permitting loading of DNA polymerase. After initiation quickly degrades to an ADP-DnaA complex that is not apt for DNA replication. Binds acidic phospholipids. The polypeptide is Chromosomal replication initiator protein DnaA (Sodalis glossinidius (strain morsitans)).